Consider the following 582-residue polypeptide: Bifunctional lycopene cyclase/phytoene synthase (582 aa).

The interval 1-261 is lycopene beta-cyclase; that stretch reads MNQNGTRLCY…VVLGLVGCDY (261 aa). A run of 6 helical transmembrane segments spans residues 34 to 54, 59 to 79, 99 to 121, 142 to 162, 170 to 190, and 242 to 262; these read CTYT…FFTA, KICI…SYLI, IPIE…YCIF, YVVA…LLLG, LILV…YPFL, and ALFF…CDYA. The phytoene synthase stretch occupies residues 268–582; it reads YESLSQPASD…LLSALVYRLE (315 aa).

The protein in the N-terminal section; belongs to the lycopene beta-cyclase family. It in the C-terminal section; belongs to the phytoene/squalene synthase family.

The protein resides in the membrane. The catalysed reaction is all-trans-lycopene = gamma-carotene. It carries out the reaction gamma-carotene = all-trans-beta-carotene. It catalyses the reaction 2 (2E,6E,10E)-geranylgeranyl diphosphate = 15-cis-phytoene + 2 diphosphate. Its pathway is carotenoid biosynthesis; beta-carotene biosynthesis. It participates in carotenoid biosynthesis; phytoene biosynthesis; all-trans-phytoene from geranylgeranyl diphosphate: step 1/1. Functionally, bifunctional enzyme that catalyzes the reactions from geranylgeranyl diphosphate to phytoene (phytoene synthase) and lycopene to beta-carotene via the intermediate gamma-carotene (lycopene cyclase). The sequence is that of Bifunctional lycopene cyclase/phytoene synthase from Aspergillus niger (strain ATCC MYA-4892 / CBS 513.88 / FGSC A1513).